A 471-amino-acid chain; its full sequence is Putative multidrug resistance protein MdtD (471 aa).

At 1 to 11 the chain is on the periplasmic side; that stretch reads MTDLPDSTRWQ. Residues 12–32 form a helical membrane-spanning segment; it reads LWIVAFGFFMQSLDTTIVNTA. Residues 33–48 lie on the Cytoplasmic side of the membrane; it reads LPSMAQSLGESPLHMH. A helical membrane pass occupies residues 49–69; the sequence is MVIVSYVLTVAVMLPASGWLA. Residues 70–76 are Periplasmic-facing; the sequence is DKVGVRN. A helical transmembrane segment spans residues 77 to 97; the sequence is IFFTAIVLFTLGSLFCALSGT. Over 98–101 the chain is Cytoplasmic; sequence LNEL. The helical transmembrane segment at 102 to 124 threads the bilayer; it reads LLARALQGVGGAMMVPVGRLTVM. The Periplasmic segment spans residues 125 to 137; sequence KIVPREQYMAAMT. The helical transmembrane segment at 138 to 158 threads the bilayer; the sequence is FVTLPGQVGPLLGPALGGLLV. The Cytoplasmic segment spans residues 159–164; sequence EYASWH. The helical transmembrane segment at 165–185 threads the bilayer; it reads WIFLINIPVGIIGAIATLLLM. Residues 186-196 are Periplasmic-facing; it reads PNYTMQTWRFD. The chain crosses the membrane as a helical span at residues 197 to 217; the sequence is LSGFLLLAVGMAVLTLALDGS. Residues 218–224 lie on the Cytoplasmic side of the membrane; sequence KGTGLSP. The chain crosses the membrane as a helical span at residues 225 to 245; it reads LAIAGLVAVGVVALVLYLLHA. Over 246 to 262 the chain is Periplasmic; the sequence is RNNNRALFSLKLFRTRT. A helical membrane pass occupies residues 263–283; sequence FSLGLAGSFAGRIGSGMLPFM. Residues 284 to 285 are Cytoplasmic-facing; sequence TP. The chain crosses the membrane as a helical span at residues 286 to 306; that stretch reads VFLQIGLGFSPFHAGLMMIPM. Over 307–341 the chain is Periplasmic; that stretch reads VLGSMGMKRIVVQVVNRFGYRRVLVATTLGLSLVT. A helical transmembrane segment spans residues 342–362; it reads LLFMTTALLGWYYVLPFVLFL. The Cytoplasmic segment spans residues 363–395; that stretch reads QGMVNSTRFSSMNTLTLKDLPDNLASSGNSLLS. The chain crosses the membrane as a helical span at residues 396 to 416; sequence MIMQLSMSIGVTIAGLLLGLF. The Periplasmic portion of the chain corresponds to 417-430; that stretch reads GSQHVSVDSGTTQT. The helical transmembrane segment at 431–451 threads the bilayer; it reads VFMYTWLSMALIIALPAFIFA. The Cytoplasmic portion of the chain corresponds to 452–471; it reads RVPNDTHQNVAISRRKRSAQ.

This sequence belongs to the major facilitator superfamily. TCR/Tet family.

The protein resides in the cell inner membrane. The sequence is that of Putative multidrug resistance protein MdtD from Shigella boydii serotype 4 (strain Sb227).